Here is a 201-residue protein sequence, read N- to C-terminus: NADH-quinone oxidoreductase subunit C (201 aa).

It belongs to the complex I 30 kDa subunit family. NDH-1 is composed of 14 different subunits. Subunits NuoB, C, D, E, F, and G constitute the peripheral sector of the complex.

The protein localises to the cell inner membrane. The catalysed reaction is a quinone + NADH + 5 H(+)(in) = a quinol + NAD(+) + 4 H(+)(out). NDH-1 shuttles electrons from NADH, via FMN and iron-sulfur (Fe-S) centers, to quinones in the respiratory chain. The immediate electron acceptor for the enzyme in this species is believed to be ubiquinone. Couples the redox reaction to proton translocation (for every two electrons transferred, four hydrogen ions are translocated across the cytoplasmic membrane), and thus conserves the redox energy in a proton gradient. The protein is NADH-quinone oxidoreductase subunit C of Azoarcus sp. (strain BH72).